A 276-amino-acid polypeptide reads, in one-letter code: Cytoskeleton protein RodZ (276 aa).

Residues 1–110 (MTSMRKKTIG…SSKKKKKKTS (110 aa)) lie on the Cytoplasmic side of the membrane. Residues 111-131 (FLPLFYFILFALSILIFVTYY) traverse the membrane as a helical; Signal-anchor for type II membrane protein segment. Residues 132 to 276 (VWNYIQTQPE…GQITVTFTKN (145 aa)) lie on the Extracellular side of the membrane.

This sequence belongs to the RodZ family. Interacts with MltG and MreC in the elongasome. Interacts with KhpB (also called EloR/Jag).

The protein resides in the cell membrane. Functionally, cytoskeletal protein that is involved in cell-shape control through regulation of the length of the long axis. Probably part of the elongasome which synthesizes peripheral peptidoglycan. This chain is Cytoskeleton protein RodZ, found in Streptococcus pneumoniae (strain ATCC BAA-255 / R6).